The primary structure comprises 177 residues: Ribosome maturation factor RimM (177 aa).

A PRC barrel domain is found at 98–171 (GETIFLSEIK…AVVMDLPEGL (74 aa)).

This sequence belongs to the RimM family. As to quaternary structure, binds ribosomal protein uS19.

The protein localises to the cytoplasm. Functionally, an accessory protein needed during the final step in the assembly of 30S ribosomal subunit, possibly for assembly of the head region. Essential for efficient processing of 16S rRNA. May be needed both before and after RbfA during the maturation of 16S rRNA. It has affinity for free ribosomal 30S subunits but not for 70S ribosomes. The protein is Ribosome maturation factor RimM of Bdellovibrio bacteriovorus (strain ATCC 15356 / DSM 50701 / NCIMB 9529 / HD100).